We begin with the raw amino-acid sequence, 558 residues long: uncharacterized protein (558 aa).

Transmembrane regions (helical) follow at residues 21–41 (IFCF…LPIA), 69–89 (FLDA…STVV), 100–120 (IVLA…AFLA), 160–180 (IIFL…LFYF), 220–240 (AFQA…IDLI), 251–271 (GLGI…GIGY), 303–323 (VITN…VEFI), 386–406 (VFPV…AMFI), 413–433 (TAGG…VAKF), 454–474 (AFLV…LLPL), 479–499 (PVSF…VGLS), and 519–539 (ALCL…LTFV).

Belongs to the TrkH potassium transport family.

The protein resides in the cell membrane. This is an uncharacterized protein from Mycoplasma genitalium (strain ATCC 33530 / DSM 19775 / NCTC 10195 / G37) (Mycoplasmoides genitalium).